A 78-amino-acid chain; its full sequence is Large ribosomal subunit protein bL28 (78 aa).

Residues 1-21 (MSRVCQVTGKKPMVGNNRSHA) are disordered.

This sequence belongs to the bacterial ribosomal protein bL28 family.

This chain is Large ribosomal subunit protein bL28, found in Shewanella baltica (strain OS223).